The sequence spans 250 residues: 1-(5-phosphoribosyl)-5-[(5-phosphoribosylamino)methylideneamino] imidazole-4-carboxamide isomerase (250 aa).

The active-site Proton acceptor is the aspartate 8. The Proton donor role is filled by aspartate 131.

The protein belongs to the HisA/HisF family.

It localises to the cytoplasm. The catalysed reaction is 1-(5-phospho-beta-D-ribosyl)-5-[(5-phospho-beta-D-ribosylamino)methylideneamino]imidazole-4-carboxamide = 5-[(5-phospho-1-deoxy-D-ribulos-1-ylimino)methylamino]-1-(5-phospho-beta-D-ribosyl)imidazole-4-carboxamide. The protein operates within amino-acid biosynthesis; L-histidine biosynthesis; L-histidine from 5-phospho-alpha-D-ribose 1-diphosphate: step 4/9. The chain is 1-(5-phosphoribosyl)-5-[(5-phosphoribosylamino)methylideneamino] imidazole-4-carboxamide isomerase from Paraburkholderia phymatum (strain DSM 17167 / CIP 108236 / LMG 21445 / STM815) (Burkholderia phymatum).